The following is a 28-amino-acid chain: Phospholipase A2 3 (28 aa).

The protein belongs to the phospholipase A2 family. Group I subfamily. It depends on Ca(2+) as a cofactor. In terms of tissue distribution, expressed by the venom gland.

It localises to the secreted. It catalyses the reaction a 1,2-diacyl-sn-glycero-3-phosphocholine + H2O = a 1-acyl-sn-glycero-3-phosphocholine + a fatty acid + H(+). Snake venom phospholipase A2 (PLA2) that inhibits neuromuscular transmission by blocking acetylcholine release from the nerve termini. PLA2 catalyzes the calcium-dependent hydrolysis of the 2-acyl groups in 3-sn-phosphoglycerides. This is Phospholipase A2 3 from Micrurus nigrocinctus (Central American coral snake).